Reading from the N-terminus, the 100-residue chain is UPF0473 protein Csac_1599 (100 aa).

The protein belongs to the UPF0473 family.

This is UPF0473 protein Csac_1599 from Caldicellulosiruptor saccharolyticus (strain ATCC 43494 / DSM 8903 / Tp8T 6331).